Consider the following 210-residue polypeptide: Thymidylate kinase (210 aa).

11–18 (GLEGAGKS) contributes to the ATP binding site.

This sequence belongs to the thymidylate kinase family.

It carries out the reaction dTMP + ATP = dTDP + ADP. Its function is as follows. Phosphorylation of dTMP to form dTDP in both de novo and salvage pathways of dTTP synthesis. The protein is Thymidylate kinase of Vibrio parahaemolyticus serotype O3:K6 (strain RIMD 2210633).